Reading from the N-terminus, the 255-residue chain is MSPPRFSGRQDGRTDPTTALPRVLCLHGGGTNARIFRTQCRVIRAHLADSFRLVFADGPFPSGPGPDVTAVYGDWGPFRAWLPHPAVKDPDVDKIDECIAAAMAADDRAGATGAWVGLLGFSQGARVAASLLLRQQRHQQRQKASLGFAYGATNAISEYRFAVLFAGRGPLLDMGAGDDNTRPEAELLELPTIHVHGLQDPGLEMHRDLLRCCLGSSARLVQWDGDHRVPIRRKDVSAVAAEIRDLASRGILGDG.

Catalysis depends on charge relay system residues S122, D200, and H227.

The protein belongs to the LovG family.

Functionally, probable esterase; part of the cluster B that mediates the biosynthesis of azasperpyranones, members of the azaphilone family that exhibit anti-cancer activities. Azasperpyranones are synthesized by 2 clusters, A and B. Cluster A is responsible for the production of the polyhydric phenol moiety while the azaphilonoid scaffold is produced by the cluster B. The non-reducing polyketide synthase ATEG_03629 produces 5-methyl orsellinic acid, which is then reduced to 5-methyl orsellinic aldehyde by the NRPS-like protein ATEG_03630. 5-methyl orsellinic aldehyde is then first hydroxylated by the FAD-dependent monooxygenase ATEG_03635 and subsequently hydroxylated by the cytochrome P450 monooxygenase ATEG_03631 to produce the unstable polyhydric phenol precursor of azasperpyranones. On the other hand, the polyketide synthase ATEG_07659 is responsible for producing the 3,5-dimethyloctadienone moiety from acetyl-CoA, three malonyl-CoA, and two S-adenosyl methionines (SAM). The 3,5-dimethyloctadienone moiety is then loaded onto the SAT domain of ATEG_07661 and extended with four malonyl-CoA and one SAM, which leads to the formation of 2,4-dihydroxy-6-(5,7-dimethyl-2-oxo-trans-3-trans-5-nonadienyl)-3-methylbenzaldehyde (compound 8) after reductive release and aldol condensation. The FAD-dependent monooxygenase ATEG_07662 is the next enzyme in the biosynthesis sequence and hydroxylates the side chain at the benzylic position of compound 8. In Aspergillus nidulans, afoF, the ortholog of the FAD-dependent oxygenase ATEG_07660, is the key enzyme for the biosynthesis of asperfuranone by catalyzing the hydroxylation at C-8 of to prevent the formation of a six-membered ring hemiacetal intermediate and thus facilitating the formation of a five-membered ring to produce asperfuranone. In Aspergillus terreus, ATEG_07660 is probably not functional, which leads to the formation of the six-membered ring hemiacetal intermediate presperpyranone instead of asperfuranone. Finally, ATEG_03636 is involved in the condensation of the polyhydric phenol moiety produced by cluster A and the perasperpyranone precursor produced by cluster B, to yield azasperpyranone A. Further modifications of azasperpyranone A result in the production of derivatives, including azasperpyranone B to F. The polypeptide is Probable esterase ATEG_07663 (Aspergillus terreus (strain NIH 2624 / FGSC A1156)).